Here is a 257-residue protein sequence, read N- to C-terminus: 4-hydroxy-tetrahydrodipicolinate reductase (257 aa).

Residue 7–12 (GCLGRM) participates in NAD(+) binding. Arginine 34 is a binding site for NADP(+). NAD(+)-binding positions include 96–98 (GTT) and 117–120 (SCNM). Histidine 149 acts as the Proton donor/acceptor in catalysis. Histidine 150 contacts (S)-2,3,4,5-tetrahydrodipicolinate. Lysine 153 (proton donor) is an active-site residue. 159 to 160 (GT) lines the (S)-2,3,4,5-tetrahydrodipicolinate pocket.

The protein belongs to the DapB family.

It localises to the cytoplasm. The enzyme catalyses (S)-2,3,4,5-tetrahydrodipicolinate + NAD(+) + H2O = (2S,4S)-4-hydroxy-2,3,4,5-tetrahydrodipicolinate + NADH + H(+). It catalyses the reaction (S)-2,3,4,5-tetrahydrodipicolinate + NADP(+) + H2O = (2S,4S)-4-hydroxy-2,3,4,5-tetrahydrodipicolinate + NADPH + H(+). It functions in the pathway amino-acid biosynthesis; L-lysine biosynthesis via DAP pathway; (S)-tetrahydrodipicolinate from L-aspartate: step 4/4. In terms of biological role, catalyzes the conversion of 4-hydroxy-tetrahydrodipicolinate (HTPA) to tetrahydrodipicolinate. The polypeptide is 4-hydroxy-tetrahydrodipicolinate reductase (Anaplasma marginale (strain St. Maries)).